Here is a 310-residue protein sequence, read N- to C-terminus: Melanocyte-stimulating hormone receptor (310 aa).

Residues 1–37 (MPMQGAQRKLLGSLNSTPTATSNLGLAANRTGAPCLE) lie on the Extracellular side of the membrane. Asn-29 carries N-linked (GlcNAc...) asparagine glycosylation. Residues 38–63 (LPIPDGLFLSLGLVSLVENVLVVAAI) traverse the membrane as a helical segment. The Cytoplasmic portion of the chain corresponds to 64-72 (AKNRNLHSS). The helical transmembrane segment at 73–93 (MYCFICCLALSDLLVSGSNML) threads the bilayer. At 94–110 (EAGVLATRASVVQQLHN) the chain is on the extracellular side. Residues 111–132 (TIDVLTCSSMLCSLCFLGAIAV) form a helical membrane-spanning segment. At 133-155 (DRYISIFYALRYHSIMTLPRAQR) the chain is on the cytoplasmic side. Residues 156 to 175 (AVAAIWVASVLSSTLFITYY) form a helical membrane-spanning segment. Residues 176–183 (DHAAVLLC) lie on the Extracellular side of the membrane. The chain crosses the membrane as a helical span at residues 184 to 203 (LVVFFLAMLVLMAVLYVHML). At 204–232 (AWACQHAQGIIRLHKRQPPAHKGFGLRGA) the chain is on the cytoplasmic side. The chain crosses the membrane as a helical span at residues 233–258 (ATLTILLGIFFLCWGPFFLRLTLVVF). Over 259–271 (CPQHLTCNCIFKN) the chain is Extracellular. Residues 272–292 (FKVFLTLIICNTIIDPLIYAF) form a helical membrane-spanning segment. Residues 293–310 (RSQELRRTLKEVLGRGRW) lie on the Cytoplasmic side of the membrane.

It belongs to the G-protein coupled receptor 1 family. Interacts with MGRN1, but does not undergo MGRN1-mediated ubiquitination; this interaction competes with GNAS-binding and thus inhibits agonist-induced cAMP production. Interacts with OPN3; the interaction results in a decrease in MC1R-mediated cAMP signaling and ultimately a decrease in melanin production in melanocytes.

The protein resides in the cell membrane. Receptor for MSH (alpha, beta and gamma) and ACTH. The activity of this receptor is mediated by G proteins which activate adenylate cyclase. Mediates melanogenesis, the production of eumelanin (black/brown) and phaeomelanin (red/yellow), via regulation of cAMP signaling in melanocytes. This Leontopithecus chrysomelas (Golden-headed lion tamarin) protein is Melanocyte-stimulating hormone receptor (MC1R).